A 381-amino-acid chain; its full sequence is MKLTKTFKAFFENEKSGGLLLLFVTVISLWAANSSYSAGYIAFWEKDLAGHSITHWINDGLMTIFFLLIGLELEREIYHGELSNIKNASLPIMAAFGGMLIPAATFLALNFGTSTQNGAGIPMATDIAFAIGILSLLGDKVPASLKVFLTALAVIDDLGAIIVIAVFYTTSIGFVNLAIALGIWVFLFVLNRMKVYNLIPYLIGGVIMWYFMLNSGIHATITGVILAFVIPFGDGGEKSTSYKLQHFLHQPVAFFILPLFAIANTCIAIESNWHIGLNHPNAFGIILGLVIGKPLGILLFSSIGVSAGLCALPKNLKWAHILGAGMLGGIGFTMSIFITLLAFKDPEIIVFSKIAIIIASIISGITGFVYLRYILTTNKNT.

The next 11 helical transmembrane spans lie at 18 to 38, 53 to 73, 89 to 109, 118 to 138, 147 to 167, 170 to 190, 210 to 230, 251 to 271, 283 to 303, 321 to 341, and 348 to 368; these read GLLLLFVTVISLWAANSSYSA, ITHWINDGLMTIFFLLIGLEL, SLPIMAAFGGMLIPAATFLAL, GAGIPMATDIAFAIGILSLLG, VFLTALAVIDDLGAIIVIAVF, TSIGFVNLAIALGIWVFLFVL, YFMLNSGIHATITGVILAFVI, PVAFFILPLFAIANTCIAIES, FGIILGLVIGKPLGILLFSSI, ILGAGMLGGIGFTMSIFITLL, and IIVFSKIAIIIASIISGITGF.

This sequence belongs to the NhaA Na(+)/H(+) (TC 2.A.33) antiporter family.

The protein localises to the cell inner membrane. The enzyme catalyses Na(+)(in) + 2 H(+)(out) = Na(+)(out) + 2 H(+)(in). In terms of biological role, na(+)/H(+) antiporter that extrudes sodium in exchange for external protons. In Flavobacterium johnsoniae (strain ATCC 17061 / DSM 2064 / JCM 8514 / BCRC 14874 / CCUG 350202 / NBRC 14942 / NCIMB 11054 / UW101) (Cytophaga johnsonae), this protein is Na(+)/H(+) antiporter NhaA 1.